Consider the following 483-residue polypeptide: Probable glycine dehydrogenase (decarboxylating) subunit 2 (483 aa).

At lysine 267 the chain carries N6-(pyridoxal phosphate)lysine.

Belongs to the GcvP family. C-terminal subunit subfamily. In terms of assembly, the glycine cleavage system is composed of four proteins: P, T, L and H. In this organism, the P 'protein' is a heterodimer of two subunits. The cofactor is pyridoxal 5'-phosphate.

The enzyme catalyses N(6)-[(R)-lipoyl]-L-lysyl-[glycine-cleavage complex H protein] + glycine + H(+) = N(6)-[(R)-S(8)-aminomethyldihydrolipoyl]-L-lysyl-[glycine-cleavage complex H protein] + CO2. Functionally, the glycine cleavage system catalyzes the degradation of glycine. The P protein binds the alpha-amino group of glycine through its pyridoxal phosphate cofactor; CO(2) is released and the remaining methylamine moiety is then transferred to the lipoamide cofactor of the H protein. The protein is Probable glycine dehydrogenase (decarboxylating) subunit 2 of Kosmotoga olearia (strain ATCC BAA-1733 / DSM 21960 / TBF 19.5.1).